The following is a 508-amino-acid chain: H/ACA ribonucleoprotein complex subunit 4 (508 aa).

The interval 1 to 29 is disordered; the sequence is MADVEVRKEKKKKKIKEEPLDGDDIGTLQ. Asp-123 (nucleophile) is an active-site residue. The PUA domain occupies 294 to 369; it reads HKRIIMKDSS…VVAKIKRVIM (76 aa). Residues 423–508 form a disordered region; that stretch reads AAQEVSPTNG…KDRDRDEAQE (86 aa). Ser-442 bears the Phosphoserine mark. A compositionally biased stretch (low complexity) spans 442-457; that stretch reads STSSVEETAAAAVSEE. Thr-443 is modified (phosphothreonine). Residues Ser-444 and Ser-445 each carry the phosphoserine modification. Position 449 is a phosphothreonine (Thr-449). Ser-455 is subject to Phosphoserine. Thr-458 bears the Phosphothreonine mark. Residues 475–485 are compositionally biased toward acidic residues; that stretch reads EAPEAAEEEAE. A compositionally biased stretch (basic and acidic residues) spans 499–508; it reads KDRDRDEAQE.

This sequence belongs to the pseudouridine synthase TruB family. In terms of assembly, component of the box H/ACA small nucleolar ribonucleoprotein (H/ACA snoRNP) complex consisting of Nop60B, Gar1, NPH2 and Nop10, and associated with H/ACA-type snoRNAs. As to expression, expressed at higher levels in females than in males. In terms of tissue distribution, expressed almost exclusively in females with high levels of expression in the ovary.

The protein localises to the nucleus. The protein resides in the nucleolus. The enzyme catalyses a uridine in RNA = a pseudouridine in RNA. Functionally, catalytic subunit of the box H/ACA small nucleolar ribonucleoprotein (H/ACA snoRNP) complex, which catalyzes pseudouridylation of rRNA. This involves the isomerization of uridine such that the ribose is subsequently attached to C5, instead of the normal N1. Pseudouridine ('psi') residues may serve to stabilize the conformation of rRNAs. Required for ribosome biogenesis; plays a central role in ribosomal RNA processing. H/ACA snoRNP complex-dependent ribosome biogenesis is important in female germline cell differentiation during oogenesis. Essential for viability and female fertility. Required for maintenance of the germline stem cell lineage during spermatogenesis. The protein is H/ACA ribonucleoprotein complex subunit 4 of Drosophila melanogaster (Fruit fly).